Here is a 505-residue protein sequence, read N- to C-terminus: Serine/threonine protein kinase OSK1 (505 aa).

One can recognise a Protein kinase domain in the interval 14-266 (YRIGKTLGIG…IREIREHQWF (253 aa)). Residues 20-28 (LGIGSFGKV) and K43 each bind ATP. D137 acts as the Proton acceptor in catalysis. Residues 287–327 (KLDDETLNDVINMGFDKNQLIESLHKRLQNEATVAYYLLLD) form the UBA domain. Over residues 347-361 (SSLAQVTPAETPNSA) the composition is skewed to polar residues. The interval 347-372 (SSLAQVTPAETPNSATDHRQHGHMES) is disordered. Positions 456-504 (SEKSTHTVKFEIQLYKTRDEKYLLDLQRVSGPQLLFLDLCSAFLTQLRV) constitute a KA1 domain.

It belongs to the protein kinase superfamily. Ser/Thr protein kinase family. As to expression, expressed in young roots, young shoots, flowers, and immature seeds. Mostly expressed in leaf sheaths and roots, and to a lower extent, in germinating seeds, leaf blades and panicles.

It localises to the nucleus. It catalyses the reaction L-seryl-[protein] + ATP = O-phospho-L-seryl-[protein] + ADP + H(+). The catalysed reaction is L-threonyl-[protein] + ATP = O-phospho-L-threonyl-[protein] + ADP + H(+). Serine/threonine-protein kinase involved in sugar signaling during germination and seedling growth. Negative regulators of sugar response complex (SRC) in alpha-amylase gene promoters, thus relieving SRC sugar repression in a MYBS1-dependent manner. Required for MYBS1 and AAMY3 accumulation under glucose starvation. The polypeptide is Serine/threonine protein kinase OSK1 (Oryza sativa subsp. japonica (Rice)).